A 265-amino-acid chain; its full sequence is Iron(3+)-hydroxamate import ATP-binding protein FhuC (265 aa).

The 237-residue stretch at 12–248 folds into the ABC transporter domain; it reads FALRNISFRV…ETLEMIYGIP (237 aa). ATP contacts are provided by residues 44–51 and 168–179; these read GHNGSGKS and CLLLDEPTSALD.

The protein belongs to the ABC transporter superfamily. Iron (Fe3+)-hydroxamate importer (TC 3.A.1.14.7) family. The complex is composed of two ATP-binding proteins (FhuC), a transmembrane protein (FhuB) and a solute-binding protein (FhuD). FhuC interacts with FhuB.

It localises to the cell inner membrane. The enzyme catalyses ATP + H2O + Fe(3+)-hydroxamate complex-[hydroxamate-binding protein]Side 1 = ADP + phosphate + Fe(3+)-hydroxamate complexSide 2 + [hydroxamate-binding protein]Side 1.. Its activity is regulated as follows. ATPase activity is inhibited by vanadate. Functionally, part of the ABC transporter complex FhuCDB involved in iron(3+)-hydroxamate import. Responsible for energy coupling to the transport system. The protein is Iron(3+)-hydroxamate import ATP-binding protein FhuC (fhuC) of Escherichia coli (strain K12).